The chain runs to 423 residues: UDP-N-acetylglucosamine 1-carboxyvinyltransferase (423 aa).

Lys21–Asn22 contributes to the phosphoenolpyruvate binding site. Position 92 (Arg92) interacts with UDP-N-acetyl-alpha-D-glucosamine. Residue Cys116 is the Proton donor of the active site. Cys116 is modified (2-(S-cysteinyl)pyruvic acid O-phosphothioketal). Positions 305 and 327 each coordinate UDP-N-acetyl-alpha-D-glucosamine.

This sequence belongs to the EPSP synthase family. MurA subfamily.

The protein localises to the cytoplasm. The enzyme catalyses phosphoenolpyruvate + UDP-N-acetyl-alpha-D-glucosamine = UDP-N-acetyl-3-O-(1-carboxyvinyl)-alpha-D-glucosamine + phosphate. It functions in the pathway cell wall biogenesis; peptidoglycan biosynthesis. In terms of biological role, cell wall formation. Adds enolpyruvyl to UDP-N-acetylglucosamine. The sequence is that of UDP-N-acetylglucosamine 1-carboxyvinyltransferase from Fervidobacterium nodosum (strain ATCC 35602 / DSM 5306 / Rt17-B1).